Consider the following 661-residue polypeptide: Transketolase (661 aa).

The residue at position 2 (Ser-2) is an N-acetylserine. His-31 contributes to the substrate binding site. Residues His-71 and 119–121 (GPL) each bind thiamine diphosphate. A Mg(2+)-binding site is contributed by Asp-160. Positions 161 and 190 each coordinate thiamine diphosphate. 2 residues coordinate Mg(2+): Asn-190 and Val-192. Residues His-267, Arg-359, and Ser-386 each coordinate substrate. A thiamine diphosphate-binding site is contributed by His-267. Glu-413 (proton donor) is an active-site residue. Phe-439 serves as a coordination point for thiamine diphosphate. 3 residues coordinate substrate: His-463, Asp-471, and Arg-522.

This sequence belongs to the transketolase family. In terms of assembly, homodimer. Requires Mg(2+) as cofactor. Ca(2+) serves as cofactor. The cofactor is Mn(2+). Co(2+) is required as a cofactor. It depends on thiamine diphosphate as a cofactor.

It catalyses the reaction D-sedoheptulose 7-phosphate + D-glyceraldehyde 3-phosphate = aldehydo-D-ribose 5-phosphate + D-xylulose 5-phosphate. Its function is as follows. Catalyzes the transfer of a two-carbon ketol group from a ketose donor to an aldose acceptor, via a covalent intermediate with the cofactor thiamine pyrophosphate. The sequence is that of Transketolase (tkt-1) from Dictyostelium discoideum (Social amoeba).